Here is a 277-residue protein sequence, read N- to C-terminus: 3-methyl-2-oxobutanoate hydroxymethyltransferase (277 aa).

D53 and D96 together coordinate Mg(2+). Residues 53-54 (DS), D96, and K126 each bind 3-methyl-2-oxobutanoate. E128 contributes to the Mg(2+) binding site. E195 (proton acceptor) is an active-site residue.

The protein belongs to the PanB family. In terms of assembly, homodecamer; pentamer of dimers. Requires Mg(2+) as cofactor.

The protein resides in the cytoplasm. The catalysed reaction is 3-methyl-2-oxobutanoate + (6R)-5,10-methylene-5,6,7,8-tetrahydrofolate + H2O = 2-dehydropantoate + (6S)-5,6,7,8-tetrahydrofolate. Its pathway is cofactor biosynthesis; (R)-pantothenate biosynthesis; (R)-pantoate from 3-methyl-2-oxobutanoate: step 1/2. Catalyzes the reversible reaction in which hydroxymethyl group from 5,10-methylenetetrahydrofolate is transferred onto alpha-ketoisovalerate to form ketopantoate. The polypeptide is 3-methyl-2-oxobutanoate hydroxymethyltransferase (Chlorobium luteolum (strain DSM 273 / BCRC 81028 / 2530) (Pelodictyon luteolum)).